Consider the following 420-residue polypeptide: Tyrosine--tRNA ligase (420 aa).

Residue Tyr38 coordinates L-tyrosine. The short motif at 43–52 (PTGDSLHIGH) is the 'HIGH' region element. L-tyrosine-binding residues include Tyr169 and Gln173. Positions 231–235 (KFGKS) match the 'KMSKS' region motif. Lys234 is a binding site for ATP. The 67-residue stretch at 353 to 419 (KNIVEFLVET…GKRKYTLVKI (67 aa)) folds into the S4 RNA-binding domain.

Belongs to the class-I aminoacyl-tRNA synthetase family. TyrS type 1 subfamily. In terms of assembly, homodimer.

The protein localises to the cytoplasm. It carries out the reaction tRNA(Tyr) + L-tyrosine + ATP = L-tyrosyl-tRNA(Tyr) + AMP + diphosphate + H(+). Catalyzes the attachment of tyrosine to tRNA(Tyr) in a two-step reaction: tyrosine is first activated by ATP to form Tyr-AMP and then transferred to the acceptor end of tRNA(Tyr). The sequence is that of Tyrosine--tRNA ligase from Lactobacillus johnsonii (strain CNCM I-12250 / La1 / NCC 533).